Here is a 371-residue protein sequence, read N- to C-terminus: uncharacterized protein (371 aa).

The region spanning 110-140 is the 4Fe-4S ferredoxin-type domain; the sequence is MEKFIDFDRCNKCGECARKICKAKWTPLNYL.

This is an uncharacterized protein from Methanocaldococcus jannaschii (strain ATCC 43067 / DSM 2661 / JAL-1 / JCM 10045 / NBRC 100440) (Methanococcus jannaschii).